Here is a 316-residue protein sequence, read N- to C-terminus: Zinc finger protein 330 (316 aa).

Residues 1 to 24 (MPKKKTGARKKAENRREREKQLRA) form a disordered region. A Nuclear localization signal motif is present at residues 3–11 (KKKTGARKK). Residues 10 to 22 (KKAENRREREKQL) are compositionally biased toward basic and acidic residues. C4-type zinc fingers lie at residues 42 to 58 (CDKC…CYFC), 67 to 104 (CAQC…CDFC), 129 to 149 (CVEC…CSFC), and 175 to 189 (CVSC…CLRC). A disordered region spans residues 227-299 (SMSTRSLKFG…ESSDLFNNLN (73 aa)). The span at 268–291 (DDDEEEDEAEDEEEEDGKDSDAES) shows a compositional bias: acidic residues. S287 is subject to Phosphoserine.

Belongs to the NOA36 family.

Its subcellular location is the nucleus. The protein resides in the nucleolus. It is found in the chromosome. It localises to the centromere. The protein is Zinc finger protein 330 (Znf330) of Mus musculus (Mouse).